Reading from the N-terminus, the 63-residue chain is Large ribosomal subunit protein uL29 (63 aa).

Belongs to the universal ribosomal protein uL29 family.

The protein is Large ribosomal subunit protein uL29 of Ectopseudomonas mendocina (strain ymp) (Pseudomonas mendocina).